A 541-amino-acid chain; its full sequence is MSETINTAAQFPSFEKPTVQFNERGWGPCELPDTFKDVPYQPFSKNDRLGKICDWTSTSNNDKKYQNKYASSFGTGNQYSYYHEEDETTFHLVDTARVQKPPHQRGRFRNMRGRGGRGRNPRGGLNNHHHHGMTTLNGKNVKARDTRRGMGKKFGHRGPPPKMRESSVAVRADWASIEEMDFPRLIKLSLPNIKDGVDIATCGTLEYYDKTYDRINVKNEKPLQKIDRIVHTVTTTDDPVIRRLSKTVGNVFATDAILATIMCSTRSNYSWDIVIEKVGDKPPTDDDSSCNSPRNLAIEATFINHNFSQQVLKTGDQEAKFKFEEPNPFISEDEDIQVASVGYRYKKWELGSDIVLVARCEHDGVLQTPSGEPQFMSIKALNEWDSKLANGVEWRQKLDTQRGAVLANELRNNACKLAKWTVQAVLAGSDQLKLGYVSRINPRDHSRHVILGTQQFKPHEFATQINLSMDNAWGVLRCIIDLVMKQKDGKYLIMKDPNKPIIRLYDIPDNTFDSDDSDDGEGDDGEGFQQVYNYANNSNKI.

Residues Val98–Leu136 are disordered. A compositionally biased stretch (basic residues) spans Lys100–Asn120.

It belongs to the eIF-3 subunit D family. Component of the eukaryotic translation initiation factor 3 (eIF-3) complex. The eIF-3 complex interacts with pix.

It localises to the cytoplasm. In terms of biological role, mRNA cap-binding component of the eukaryotic translation initiation factor 3 (eIF-3) complex, which is involved in protein synthesis of a specialized repertoire of mRNAs and, together with other initiation factors, stimulates binding of mRNA and methionyl-tRNAi to the 40S ribosome. The eIF-3 complex specifically targets and initiates translation of a subset of mRNAs involved in cell proliferation. In the eIF-3 complex, eif3d specifically recognizes and binds the 7-methylguanosine cap of a subset of mRNAs. This Drosophila persimilis (Fruit fly) protein is Eukaryotic translation initiation factor 3 subunit D-1.